Consider the following 181-residue polypeptide: Alkyl hydroperoxide reductase AhpD (181 aa).

The active-site Proton donor is Cys-131. An intrachain disulfide couples Cys-131 to Cys-134. Catalysis depends on Cys-134, which acts as the Cysteine sulfenic acid (-SOH) intermediate.

It belongs to the AhpD family.

It catalyses the reaction N(6)-[(R)-dihydrolipoyl]-L-lysyl-[lipoyl-carrier protein] + a hydroperoxide = N(6)-[(R)-lipoyl]-L-lysyl-[lipoyl-carrier protein] + an alcohol + H2O. Its function is as follows. Antioxidant protein with alkyl hydroperoxidase activity. Required for the reduction of the AhpC active site cysteine residues and for the regeneration of the AhpC enzyme activity. The chain is Alkyl hydroperoxide reductase AhpD from Azorhizobium caulinodans (strain ATCC 43989 / DSM 5975 / JCM 20966 / LMG 6465 / NBRC 14845 / NCIMB 13405 / ORS 571).